A 474-amino-acid polypeptide reads, in one-letter code: tRNA-2-methylthio-N(6)-dimethylallyladenosine synthase (474 aa).

The region spanning 3–120 (QKLHIKTWGC…LPEMINQIRG (118 aa)) is the MTTase N-terminal domain. [4Fe-4S] cluster-binding residues include cysteine 12, cysteine 49, cysteine 83, cysteine 157, cysteine 161, and cysteine 164. The region spanning 143–375 (RAEGPTAFVS…QQRINNQAAQ (233 aa)) is the Radical SAM core domain. Residues 378–441 (RAMLGTEQRV…TNSLRGEVVR (64 aa)) form the TRAM domain.

Belongs to the methylthiotransferase family. MiaB subfamily. As to quaternary structure, monomer. The cofactor is [4Fe-4S] cluster.

Its subcellular location is the cytoplasm. It catalyses the reaction N(6)-dimethylallyladenosine(37) in tRNA + (sulfur carrier)-SH + AH2 + 2 S-adenosyl-L-methionine = 2-methylsulfanyl-N(6)-dimethylallyladenosine(37) in tRNA + (sulfur carrier)-H + 5'-deoxyadenosine + L-methionine + A + S-adenosyl-L-homocysteine + 2 H(+). In terms of biological role, catalyzes the methylthiolation of N6-(dimethylallyl)adenosine (i(6)A), leading to the formation of 2-methylthio-N6-(dimethylallyl)adenosine (ms(2)i(6)A) at position 37 in tRNAs that read codons beginning with uridine. This chain is tRNA-2-methylthio-N(6)-dimethylallyladenosine synthase, found in Pasteurella multocida (strain Pm70).